The primary structure comprises 329 residues: Delta-aminolevulinic acid dehydratase (329 aa).

Catalysis depends on K202, which acts as the Schiff-base intermediate with substrate. Residues R212 and R223 each coordinate 5-aminolevulinate. Position 239 (E239) interacts with Mg(2+). The active-site Schiff-base intermediate with substrate is K254. 5-aminolevulinate is bound by residues S280 and Y319.

Belongs to the ALAD family. Homooctamer.

It carries out the reaction 2 5-aminolevulinate = porphobilinogen + 2 H2O + H(+). It functions in the pathway porphyrin-containing compound metabolism; protoporphyrin-IX biosynthesis; coproporphyrinogen-III from 5-aminolevulinate: step 1/4. Its function is as follows. Catalyzes an early step in the biosynthesis of tetrapyrroles. Binds two molecules of 5-aminolevulinate per subunit, each at a distinct site, and catalyzes their condensation to form porphobilinogen. The chain is Delta-aminolevulinic acid dehydratase (hemB) from Mycobacterium leprae (strain TN).